Consider the following 189-residue polypeptide: Probable nicotinate-nucleotide adenylyltransferase (189 aa).

It belongs to the NadD family.

The catalysed reaction is nicotinate beta-D-ribonucleotide + ATP + H(+) = deamido-NAD(+) + diphosphate. It functions in the pathway cofactor biosynthesis; NAD(+) biosynthesis; deamido-NAD(+) from nicotinate D-ribonucleotide: step 1/1. Functionally, catalyzes the reversible adenylation of nicotinate mononucleotide (NaMN) to nicotinic acid adenine dinucleotide (NaAD). The polypeptide is Probable nicotinate-nucleotide adenylyltransferase (Staphylococcus aureus (strain N315)).